The sequence spans 802 residues: Lon protease (802 aa).

Residues 17–209 (LPILPLNNVV…QVLSFLERER (193 aa)) form the Lon N-terminal domain. ATP is bound at residue 363-370 (GPPGVGKT). In terms of domain architecture, Lon proteolytic spans 599 to 780 (EDEVGVVTGL…DEVLPRVLHP (182 aa)). Residues Ser-686 and Lys-729 contribute to the active site.

It belongs to the peptidase S16 family. Homohexamer. Organized in a ring with a central cavity.

The protein localises to the cytoplasm. It catalyses the reaction Hydrolysis of proteins in presence of ATP.. Its function is as follows. ATP-dependent serine protease that mediates the selective degradation of mutant and abnormal proteins as well as certain short-lived regulatory proteins. Required for cellular homeostasis and for survival from DNA damage and developmental changes induced by stress. Degrades polypeptides processively to yield small peptide fragments that are 5 to 10 amino acids long. Binds to DNA in a double-stranded, site-specific manner. This Roseiflexus castenholzii (strain DSM 13941 / HLO8) protein is Lon protease.